Consider the following 65-residue polypeptide: Small ribosomal subunit protein bS21 (65 aa).

Over residues 33–42 (RRREHYEKPS) the composition is skewed to basic and acidic residues. A disordered region spans residues 33–65 (RRREHYEKPSVKRKRKEAARLRKLQKMAREANN). Basic residues predominate over residues 43–58 (VKRKRKEAARLRKLQK).

Belongs to the bacterial ribosomal protein bS21 family.

This is Small ribosomal subunit protein bS21 from Herpetosiphon aurantiacus (strain ATCC 23779 / DSM 785 / 114-95).